The chain runs to 146 residues: Ribonuclease H (146 aa).

The 143-residue stretch at 1-143 (MKKRVTIYTD…CDELARQAIK (143 aa)) folds into the RNase H type-1 domain. The Mg(2+) site is built by aspartate 10, glutamate 48, aspartate 70, and aspartate 135.

Belongs to the RNase H family. Monomer. It depends on Mg(2+) as a cofactor.

It is found in the cytoplasm. It carries out the reaction Endonucleolytic cleavage to 5'-phosphomonoester.. Functionally, endonuclease that specifically degrades the RNA of RNA-DNA hybrids. This Chlorobium limicola (strain DSM 245 / NBRC 103803 / 6330) protein is Ribonuclease H.